We begin with the raw amino-acid sequence, 245 residues long: Protein-glutamine gamma-glutamyltransferase (245 aa).

It belongs to the bacillus TGase family.

It catalyses the reaction L-glutaminyl-[protein] + L-lysyl-[protein] = [protein]-L-lysyl-N(6)-5-L-glutamyl-[protein] + NH4(+). Functionally, probably plays a role in the assembly of the spore coat proteins by catalyzing epsilon-(gamma-glutamyl)lysine cross-links. In wild-type spores at 37 degrees Celsius, tgl mediates the cross-linking of GerQ in higher molecular mass forms, probably in cooperation with YabG. The protein is Protein-glutamine gamma-glutamyltransferase (tgl) of Bacillus subtilis (strain 168).